A 725-amino-acid polypeptide reads, in one-letter code: D-(-)-3-hydroxybutyrate oligomer hydrolase (725 aa).

The signal sequence occupies residues 1 to 22 (MNTTRDANRLRQRASLSGLALA). The active-site Charge relay system is Ser322.

The protein belongs to the D-(-)-3-hydroxybutyrate oligomer hydrolase family.

Its subcellular location is the secreted. It catalyses the reaction (3R)-hydroxybutanoate dimer + H2O = 2 (R)-3-hydroxybutanoate + H(+). It participates in lipid metabolism; butanoate metabolism. In terms of biological role, participates in the degradation of poly-3-hydroxybutyrate (PHB). It works downstream of poly(3-hydroxybutyrate) depolymerase, hydrolyzing D(-)-3-hydroxybutyrate oligomers of various length (3HB-oligomers) into 3HB-monomers. This Ralstonia nicotianae (strain ATCC BAA-1114 / GMI1000) (Ralstonia solanacearum) protein is D-(-)-3-hydroxybutyrate oligomer hydrolase.